Here is a 242-residue protein sequence, read N- to C-terminus: uncharacterized protein (242 aa).

S-adenosyl-L-methionine contacts are provided by G198, I218, and L227.

Belongs to the class IV-like SAM-binding methyltransferase superfamily. RNA methyltransferase TrmH family.

This is an uncharacterized protein from Mycoplasma genitalium (strain ATCC 33530 / DSM 19775 / NCTC 10195 / G37) (Mycoplasmoides genitalium).